Here is a 249-residue protein sequence, read N- to C-terminus: Acidic leucine-rich nuclear phosphoprotein 32 family member A (249 aa).

T15 bears the Phosphothreonine mark. Residue S17 is modified to Phosphoserine. LRR repeat units follow at residues 18-38 (DVKE…EGLT), 43-64 (ELEF…PKLN), 65-87 (KLKK…AEKC), and 89-110 (NLTH…EPLK). One can recognise an LRRCT domain in the interval 123 to 161 (CEVTNLNDYRENVFKLLPQLTYLDGYDRDDKEAPDSDAE). The segment covering 147–156 (GYDRDDKEAP) has biased composition (basic and acidic residues). Residues 147–249 (GYDRDDKEAP…EPEDEGEDDD (103 aa)) form a disordered region. Residues 150 to 174 (RDDKEAPDSDAEGYVEGLDDDEEDE) form a necessary for tumor-suppressive function region. A compositionally biased stretch (acidic residues) spans 157–230 (DSDAEGYVEG…DEEDEEELGE (74 aa)). 2 positions are modified to phosphoserine: S158 and S204. Positions 165–249 (EGLDDDEEDE…EPEDEGEDDD (85 aa)) are interaction with E4F1.

This sequence belongs to the ANP32 family. As to quaternary structure, component of the SET complex, composed of at least ANP32A, APEX1, HMGB2, NME1, SET and TREX1. Directly interacts with SET. Interacts with ATXN1/SCA1. Interacts with MAP1B. Interacts with ELAVL1. Part of the INHAT (inhibitor of histone acetyltransferases) complex. Interacts with E4F1. The N-terminus is blocked. Post-translationally, phosphorylated on serine residues, at least in part by casein kinase 2/CK2. In terms of processing, some glutamate residues are glycylated by TTLL8. This modification occurs exclusively on glutamate residues and results in a glycine chain on the gamma-carboxyl group. Widely distributed in the central nervous system, with an abundant expression in the cerebellum.

The protein resides in the nucleus. It is found in the cytoplasm. It localises to the endoplasmic reticulum. Its function is as follows. Multifunctional protein that is involved in the regulation of many processes including tumor suppression, apoptosis, cell cycle progression or transcription. Promotes apoptosis by favouring the activation of caspase-9/CASP9 and allowing apoptosome formation. In addition, plays a role in the modulation of histone acetylation and transcription as part of the INHAT (inhibitor of histone acetyltransferases) complex. Inhibits the histone-acetyltranferase activity of EP300/CREBBP (CREB-binding protein) and EP300/CREBBP-associated factor by histone masking. Preferentially binds to unmodified histone H3 and sterically inhibiting its acetylation and phosphorylation leading to cell growth inhibition. Participates in other biochemical processes such as regulation of mRNA nuclear-to-cytoplasmic translocation and stability by its association with ELAVL1 (Hu-antigen R). Plays a role in E4F1-mediated transcriptional repression as well as inhibition of protein phosphatase 2A. The sequence is that of Acidic leucine-rich nuclear phosphoprotein 32 family member A (ANP32A) from Bos taurus (Bovine).